Consider the following 810-residue polypeptide: LPS-assembly protein LptD (810 aa).

Disordered stretches follow at residues 1 to 26 (MTEQRRSPNKRANKPPALSGLSSRTG) and 54 to 79 (SAVPDIDQTESVVETAPEVPLAPPVS). The signal sequence occupies residues 1 to 49 (MTEQRRSPNKRANKPPALSGLSSRTGRLPASALRPLVLAMAGLSVGAHA).

It belongs to the LptD family. In terms of assembly, component of the lipopolysaccharide transport and assembly complex. Interacts with LptE and LptA.

It localises to the cell outer membrane. Its function is as follows. Together with LptE, is involved in the assembly of lipopolysaccharide (LPS) at the surface of the outer membrane. The protein is LPS-assembly protein LptD of Cupriavidus pinatubonensis (strain JMP 134 / LMG 1197) (Cupriavidus necator (strain JMP 134)).